A 270-amino-acid polypeptide reads, in one-letter code: Glutamate racemase (270 aa).

Substrate-binding positions include 14–15 (DS) and 46–47 (YG). Cysteine 77 serves as the catalytic Proton donor/acceptor. 78-79 (NT) contacts substrate. Catalysis depends on cysteine 186, which acts as the Proton donor/acceptor. 187–188 (TH) contacts substrate.

Belongs to the aspartate/glutamate racemases family.

It carries out the reaction L-glutamate = D-glutamate. It participates in cell wall biogenesis; peptidoglycan biosynthesis. In terms of biological role, provides the (R)-glutamate required for cell wall biosynthesis. The sequence is that of Glutamate racemase from Trichodesmium erythraeum (strain IMS101).